A 596-amino-acid polypeptide reads, in one-letter code: MENIRNFSIIAHIDHGKSTLADRLISECNAVEDRQMSSQVMDTMDIERERGITIKAQSVRLEYKMNDKKYILNLIDTPGHVDFSYEVSRSLASCEGAILVVDASQGVQAQTIANVYIAIEHNLEIIPVLNKIDLPNADPDRVKNEIEHIIGIDCTDAIEVSAKTGIGIKDLIEAIIKRIPAPKIEPKKPLKAIIYDSWFDNYLGALALIRVYDGEIHKNDEVFIMGTEKKHIVLDLMYPNPISPIKTEKISSGEIGIVVLGLKNVSDVSVGDTITLSNNKANTPIGGFERAKPFVFAGIYPIETDKFEDLRDALNKLKLNDSSISYEPETSLALGFGFRVGFLGLLHMEVIKERLEREFNLNLIATAPTVTYEIYLTNGEMLKIHNPSELPPISNIQMIKEPYSHATIITPAEFLGNLITLLNSRRGIQTKMDYITSDRVLLEYDIPTNEIIMDFYDKLKSGTKGYASFDYEPIDYKQGDLIKLDIKVAGENVDALSIIVPRDKALQKGRDLVKAMKEIVPRQLFEVAIQASIGNKIIARENVRAMGKNVTAKCYGGDITRKRKLLEKQKEGKKRMKSIGKVNLPSEAFLSVLKID.

The region spanning 2–183 (ENIRNFSIIA…AIIKRIPAPK (182 aa)) is the tr-type G domain. GTP contacts are provided by residues 14–19 (DHGKST) and 130–133 (NKID).

This sequence belongs to the TRAFAC class translation factor GTPase superfamily. Classic translation factor GTPase family. LepA subfamily.

The protein resides in the cell inner membrane. It catalyses the reaction GTP + H2O = GDP + phosphate + H(+). In terms of biological role, required for accurate and efficient protein synthesis under certain stress conditions. May act as a fidelity factor of the translation reaction, by catalyzing a one-codon backward translocation of tRNAs on improperly translocated ribosomes. Back-translocation proceeds from a post-translocation (POST) complex to a pre-translocation (PRE) complex, thus giving elongation factor G a second chance to translocate the tRNAs correctly. Binds to ribosomes in a GTP-dependent manner. The sequence is that of Elongation factor 4 from Campylobacter hominis (strain ATCC BAA-381 / DSM 21671 / CCUG 45161 / LMG 19568 / NCTC 13146 / CH001A).